We begin with the raw amino-acid sequence, 206 residues long: Elongation factor Ts (206 aa).

The segment at 81 to 84 is involved in Mg(2+) ion dislocation from EF-Tu; the sequence is TDFV.

It belongs to the EF-Ts family.

The protein resides in the cytoplasm. Functionally, associates with the EF-Tu.GDP complex and induces the exchange of GDP to GTP. It remains bound to the aminoacyl-tRNA.EF-Tu.GTP complex up to the GTP hydrolysis stage on the ribosome. The polypeptide is Elongation factor Ts (Maridesulfovibrio salexigens (strain ATCC 14822 / DSM 2638 / NCIMB 8403 / VKM B-1763) (Desulfovibrio salexigens)).